Reading from the N-terminus, the 343-residue chain is Ribosomal RNA small subunit methyltransferase C (343 aa).

Belongs to the methyltransferase superfamily. RsmC family. In terms of assembly, monomer.

It is found in the cytoplasm. It catalyses the reaction guanosine(1207) in 16S rRNA + S-adenosyl-L-methionine = N(2)-methylguanosine(1207) in 16S rRNA + S-adenosyl-L-homocysteine + H(+). In terms of biological role, specifically methylates the guanine in position 1207 of 16S rRNA in the 30S particle. This is Ribosomal RNA small subunit methyltransferase C from Shewanella sediminis (strain HAW-EB3).